Consider the following 338-residue polypeptide: Probable tRNA pseudouridine synthase B (338 aa).

Asp-80 acts as the Nucleophile in catalysis. Residues 247-322 (LPRIEIRDTA…IMVDTKRVLM (76 aa)) form the PUA domain.

It belongs to the pseudouridine synthase TruB family. Type 2 subfamily.

It carries out the reaction uridine(55) in tRNA = pseudouridine(55) in tRNA. Could be responsible for synthesis of pseudouridine from uracil-55 in the psi GC loop of transfer RNAs. This is Probable tRNA pseudouridine synthase B from Methanopyrus kandleri (strain AV19 / DSM 6324 / JCM 9639 / NBRC 100938).